The primary structure comprises 683 residues: MNVLAKTRVYELAKELDITSRELIDILASEFNITVKNHMSVLDEEDAELIKEIFDDEENSDEKANRSVVADEEIDASNKKVKNKKKEVKKGNKNADNESSEEEIVIEMEDTITVKALADKLKKPTTEVIKQLMFMGVMAAINQELDFNTAEKLAEKFNAVIMQKEDDTITKEIEDEDEGTEKRPPVVTVMGHVDHGKTSILDAIRKAKVTSTEAGGITQHIGAYTVNVNGEKITFLDTPGHEAFTTMRARGAQVTDIVILVVAADDGIMPQTIEAINHCKAAEVPMIVAINKIDKPAANLDRVKQELTEHNLIPEDWGGDVITVPVSAHTKEGLDTLLEMIILTAEMEELKADPERKAKGTVIEAKLDKGRGPVASLLVQNGTLKVGDSIIVGNTYGRIRAMFDDKGKNIKVAGPSIPVEILGLSEVPDAGDRFNVVKDEKTARNMADKRKEKLREKRMQSTNKVSLEDLYNQIQEGKVKELDVIVKADVQGSVEAVIQSLEKLSTDSVKVRVIHGAVGAISETDVTLAAASNAVIIGFNVRPSNNATVLAEKEGVNVRTYRVIYDALDDIKAAMVGMLEPEYKEVVLGSAEVRVVYKISSVGTIAGCYVLNGKITRDSSVRVIRDGIVIFESEISSLKRFKDDAKEVAKGYECGLSVEKFNDIKEGDIIEAFTMEEIKPKNL.

The tr-type G domain maps to 182 to 351 (KRPPVVTVMG…ILTAEMEELK (170 aa)). A G1 region spans residues 191–198 (GHVDHGKT). 191–198 (GHVDHGKT) provides a ligand contact to GTP. The tract at residues 216–220 (GITQH) is G2. The tract at residues 237 to 240 (DTPG) is G3. GTP contacts are provided by residues 237–241 (DTPGH) and 291–294 (NKID). Residues 291–294 (NKID) are G4. Residues 327 to 329 (SAH) are G5.

The protein belongs to the TRAFAC class translation factor GTPase superfamily. Classic translation factor GTPase family. IF-2 subfamily.

The protein localises to the cytoplasm. One of the essential components for the initiation of protein synthesis. Protects formylmethionyl-tRNA from spontaneous hydrolysis and promotes its binding to the 30S ribosomal subunits. Also involved in the hydrolysis of GTP during the formation of the 70S ribosomal complex. This is Translation initiation factor IF-2 from Clostridium novyi (strain NT).